A 267-amino-acid chain; its full sequence is 3-methyl-2-oxobutanoate hydroxymethyltransferase (267 aa).

Mg(2+)-binding residues include D45 and D84. Residues 45-46 (DS), D84, and K113 each bind 3-methyl-2-oxobutanoate. E115 serves as a coordination point for Mg(2+). E182 acts as the Proton acceptor in catalysis.

Belongs to the PanB family. In terms of assembly, homodecamer; pentamer of dimers. Mg(2+) serves as cofactor.

Its subcellular location is the cytoplasm. It carries out the reaction 3-methyl-2-oxobutanoate + (6R)-5,10-methylene-5,6,7,8-tetrahydrofolate + H2O = 2-dehydropantoate + (6S)-5,6,7,8-tetrahydrofolate. It participates in cofactor biosynthesis; coenzyme A biosynthesis. Its function is as follows. Catalyzes the reversible reaction in which hydroxymethyl group from 5,10-methylenetetrahydrofolate is transferred onto alpha-ketoisovalerate to form ketopantoate. The chain is 3-methyl-2-oxobutanoate hydroxymethyltransferase from Saccharolobus islandicus (strain L.S.2.15 / Lassen #1) (Sulfolobus islandicus).